A 566-amino-acid polypeptide reads, in one-letter code: Transcription factor opdL (566 aa).

The segment at residues 15–45 (CATCARAKCRCVPRNGGRGRCERCHHLNKEC) is a DNA-binding region (zn(2)-C6 fungal-type).

The protein resides in the nucleus. Transcription factor; part of the gene cluster that mediates the biosynthesis of oxopyrrolidines, polyketide-amino acid hybrid compounds with feature structures of tetramic acid. The polypeptide is Transcription factor opdL (Penicillium oxalicum (strain 114-2 / CGMCC 5302) (Penicillium decumbens)).